A 302-amino-acid chain; its full sequence is tRNA pseudouridine synthase B (302 aa).

The active-site Nucleophile is Asp-45.

It belongs to the pseudouridine synthase TruB family. Type 1 subfamily.

It carries out the reaction uridine(55) in tRNA = pseudouridine(55) in tRNA. In terms of biological role, responsible for synthesis of pseudouridine from uracil-55 in the psi GC loop of transfer RNAs. The chain is tRNA pseudouridine synthase B from Francisella tularensis subsp. tularensis (strain WY96-3418).